Consider the following 250-residue polypeptide: Large ribosomal subunit protein uL30 (250 aa).

Belongs to the universal ribosomal protein uL30 family.

The sequence is that of Large ribosomal subunit protein uL30 (RPL7) from Yarrowia lipolytica (strain CLIB 122 / E 150) (Yeast).